The following is a 287-amino-acid chain: Orotidine 5'-phosphate decarboxylase (287 aa).

Residue K97 is the Proton donor of the active site.

It belongs to the OMP decarboxylase family. Type 2 subfamily.

The catalysed reaction is orotidine 5'-phosphate + H(+) = UMP + CO2. It participates in pyrimidine metabolism; UMP biosynthesis via de novo pathway; UMP from orotate: step 2/2. This chain is Orotidine 5'-phosphate decarboxylase (pyrF), found in Clostridium perfringens (strain 13 / Type A).